A 164-amino-acid chain; its full sequence is MMRIGHGYDVHQLVAERKLILGGVDIPHTLGLLGHSDADVLLHAICDAILGALGEGDIGKHFPDTDPAYKGISSIKLLHEVMRLAETKGYRLGNLDATIIAQRPKLAPFIGNMRENIAEACGTDVSRINVKATTTEQLGFEGRGEGISSHAVVLLNKAAHSEER.

2 residues coordinate a divalent metal cation: aspartate 9 and histidine 11. 4-CDP-2-C-methyl-D-erythritol 2-phosphate-binding positions include 9 to 11 (DVH) and 35 to 36 (HS). Histidine 43 is an a divalent metal cation binding site. 4-CDP-2-C-methyl-D-erythritol 2-phosphate is bound by residues 57 to 59 (DIG), 62 to 66 (FPDTD), 133 to 136 (TTTE), phenylalanine 140, and arginine 143.

This sequence belongs to the IspF family. Homotrimer. Requires a divalent metal cation as cofactor.

It carries out the reaction 4-CDP-2-C-methyl-D-erythritol 2-phosphate = 2-C-methyl-D-erythritol 2,4-cyclic diphosphate + CMP. Its pathway is isoprenoid biosynthesis; isopentenyl diphosphate biosynthesis via DXP pathway; isopentenyl diphosphate from 1-deoxy-D-xylulose 5-phosphate: step 4/6. In terms of biological role, involved in the biosynthesis of isopentenyl diphosphate (IPP) and dimethylallyl diphosphate (DMAPP), two major building blocks of isoprenoid compounds. Catalyzes the conversion of 4-diphosphocytidyl-2-C-methyl-D-erythritol 2-phosphate (CDP-ME2P) to 2-C-methyl-D-erythritol 2,4-cyclodiphosphate (ME-CPP) with a corresponding release of cytidine 5-monophosphate (CMP). The chain is 2-C-methyl-D-erythritol 2,4-cyclodiphosphate synthase from Syntrophotalea carbinolica (strain DSM 2380 / NBRC 103641 / GraBd1) (Pelobacter carbinolicus).